Here is a 407-residue protein sequence, read N- to C-terminus: Arrestin domain-containing protein 2 (407 aa).

It belongs to the arrestin family. In terms of assembly, interacts with WWP1 (via WW domains).

The chain is Arrestin domain-containing protein 2 (ARRDC2) from Homo sapiens (Human).